We begin with the raw amino-acid sequence, 352 residues long: MSDSPVTLPESIKLTEYSHGAGCGCKISPKVLSTILASQLPVFTDPNLLVGNQSRDDAAVYKLNDDIGIISTTDFFMPIVDDPFTFGRIAATNAISDIYAMGGTPIMAIAILGWPINKLPAEVAQQVVDGGRQACMEAGIMLAGGHSIDAPEPIFGLAVTGQIALTDLKQNDTAKAGDRLYLTKPIGIGILTTAQKQKKLQDEDSHIAVNAMCQLNTIGTTIAKISGVNALTDVTGFGLAGHLLEMCQGTKLTAKLKFDAVPLLPRALDYLALGCVPGGTHRNYDSYGEHLPELSEHQKAILCDPQTSGGLLVAVSAEAEAELIALLDAHHIAPICIGSLETPTTEANVVLY.

Cys-23 is an active-site residue. ATP contacts are provided by residues Lys-26 and 54–56 (SRD). Position 57 (Asp-57) interacts with Mg(2+). ATP-binding positions include Asp-74, Asp-97, and 145–147 (GHS). Asp-97 lines the Mg(2+) pocket. Residue Asp-233 participates in Mg(2+) binding.

The protein belongs to the selenophosphate synthase 1 family. Class I subfamily. Homodimer. Mg(2+) is required as a cofactor.

The catalysed reaction is hydrogenselenide + ATP + H2O = selenophosphate + AMP + phosphate + 2 H(+). Synthesizes selenophosphate from selenide and ATP. The protein is Selenide, water dikinase of Shewanella baltica (strain OS223).